A 382-amino-acid chain; its full sequence is MKITRLTTYHAAPRWLFLKVETDEGITGWGEPVIEGRARSVEAAVHELAGYVVGKDPARINDLWQTMYRAGFYRGGAILMSAIAGIDQALWDIKGKALGVPVYELLGGLVRDRMKTYRWVGGDRPGAIIQQITDYRALGFDTFKFNGTEEMKLIDSARAVDAAVVKVAEIREAFGNTIDFGIDFHGRVGAPMAKALLRELEPFKPLFVEEPVLAEQAEYYPRLAASTSIPLAAGERMFSRFEFKNVLCAGGIGMVQPDLSHAGGITECVKIAAIAEAYDVGFAPHCPLGPIALAACLHVDFVSHNAVLQEQSIGIHYNEGADLLDYVINKDDFHCVDGSIAALPKPGLGVEIDEDMLKRANENPPDWRNPVWRHSDGSIAEW.

Mg(2+) is bound at residue D183. Catalysis depends on H185, which acts as the Proton donor. 2 residues coordinate Mg(2+): E209 and E235. Residue H285 is the Proton acceptor of the active site. The disordered stretch occupies residues 361 to 382 (NENPPDWRNPVWRHSDGSIAEW).

Belongs to the mandelate racemase/muconate lactonizing enzyme family. GalD subfamily. Mg(2+) serves as cofactor.

The catalysed reaction is D-galactonate = 2-dehydro-3-deoxy-D-galactonate + H2O. Its pathway is carbohydrate acid metabolism; D-galactonate degradation; D-glyceraldehyde 3-phosphate and pyruvate from D-galactonate: step 1/3. Its function is as follows. Catalyzes the dehydration of D-galactonate to 2-keto-3-deoxy-D-galactonate. This Xanthomonas oryzae pv. oryzae (strain MAFF 311018) protein is D-galactonate dehydratase.